The following is a 435-amino-acid chain: Nuclear hormone receptor family member nhr-14 (435 aa).

A DNA-binding region (nuclear receptor) is located at residues 17–92 (ADFCVVCGDK…DGMKPEAIQN (76 aa)). NR C4-type zinc fingers lie at residues 20-40 (CVVC…CNGC) and 56-80 (CRFN…FQKC). The tract at residues 91 to 126 (QNERDRIGSTKRRKRSGANSENNSDSEGTPSPKIEV) is disordered. The segment covering 107-119 (GANSENNSDSEGT) has biased composition (polar residues). The NR LBD domain occupies 131-355 (VSRKLIEMLL…KRDTISPKIE (225 aa)).

The protein belongs to the nuclear hormone receptor family. Expressed in intestine and head neurons in young adults.

The protein resides in the nucleus. Its function is as follows. Orphan nuclear receptor. Transcriptional repressor of intestinal metal transporter smf-3 and genes of the innate immune response. Inhibits nuclear localization of transcription factor pqm-1; in response to pathogen stress, may facilitate translocation of pqm-1, leading to transcriptional activation of genes involved in innate immunity and iron uptake. The sequence is that of Nuclear hormone receptor family member nhr-14 (nhr-14) from Caenorhabditis elegans.